Here is a 252-residue protein sequence, read N- to C-terminus: FKBP-type peptidyl-prolyl cis-trans isomerase FkpA (252 aa).

Residues 165–252 (NAEITVHYKG…DIELLDIKNI (88 aa)) enclose the PPIase FKBP-type domain.

The protein belongs to the FKBP-type PPIase family.

The catalysed reaction is [protein]-peptidylproline (omega=180) = [protein]-peptidylproline (omega=0). PPIases accelerate the folding of proteins. It catalyzes the cis-trans isomerization of proline imidic peptide bonds in oligopeptides. The protein is FKBP-type peptidyl-prolyl cis-trans isomerase FkpA (fkpA) of Buchnera aphidicola subsp. Schizaphis graminum (strain Sg).